Here is a 422-residue protein sequence, read N- to C-terminus: MAPLSCNPPEWEDDERMSFLFSAFKRTRDVNTCDWDGKMKFWIPLILTHARAQGLLSITLSQLENDFRRKGCAPMGLRTVIQEMIRQGTLRKETDFVSGVSSGWLSWGMRQLVIRPLRWTIGTMLGSQVGPDEPLVIPEVIKERAALVLQRYQSSTFRSFPLLCEEEVHTLCAEICPNPSALNLVLLQLQGDKKICVLERAGQKLVKFVRVSVGQVEPISESDLGIYQLQQGEKLLSERLQSAGEESNRLTEEARTYNRAGNKNQALRCLRKRKLVERRITELQNKQDNIQGILERISAAETDRKVVSAYQMGVSALKQALKDVTLEKAESIVDQIQEYCDLQDDLSQTLSSVTDADVDSDDLERELNEILQNEEMIIDLPDVPSGPVIISPKRPTEWKMDQAAHSPADGSFLRSVPEPMLQ.

Residues 234 to 304 (KLLSERLQSA…ERISAAETDR (71 aa)) are a coiled coil. A disordered region spans residues 394 to 422 (RPTEWKMDQAAHSPADGSFLRSVPEPMLQ).

It belongs to the SNF7 family.

It localises to the cytoplasm. Its subcellular location is the nucleus envelope. ESCRT-III-like protein required to recruit the ESCRT-III complex to the nuclear envelope during late anaphase. Together with SPAST, the ESCRT-III complex promotes nuclear envelope sealing and mitotic spindle disassembly during late anaphase. Plays a role in the endosomal sorting pathway. The protein is Charged multivesicular body protein 7 (chmp7) of Xenopus laevis (African clawed frog).